Reading from the N-terminus, the 207-residue chain is Recombination protein RecR (207 aa).

Residues 62–77 form a C4-type zinc finger; sequence CSRCNTFTEQDVCETC. The region spanning 85 to 184 is the Toprim domain; that stretch reads SVLCVVETPA…KVSRLARGVP (100 aa).

This sequence belongs to the RecR family.

Functionally, may play a role in DNA repair. It seems to be involved in an RecBC-independent recombinational process of DNA repair. It may act with RecF and RecO. The sequence is that of Recombination protein RecR from Ralstonia nicotianae (strain ATCC BAA-1114 / GMI1000) (Ralstonia solanacearum).